A 94-amino-acid chain; its full sequence is Large ribosomal subunit protein bL25 (94 aa).

It belongs to the bacterial ribosomal protein bL25 family. As to quaternary structure, part of the 50S ribosomal subunit; part of the 5S rRNA/L5/L18/L25 subcomplex. Contacts the 5S rRNA. Binds to the 5S rRNA independently of L5 and L18.

Functionally, this is one of the proteins that binds to the 5S RNA in the ribosome where it forms part of the central protuberance. The chain is Large ribosomal subunit protein bL25 from Yersinia pestis bv. Antiqua (strain Antiqua).